Reading from the N-terminus, the 453-residue chain is Aminodeoxychorismate synthase component 1 (453 aa).

L-tryptophan contacts are provided by residues Ser-36, Tyr-43 to Phe-46, and Pro-240 to Ser-242. Catalysis depends on Glu-258, which acts as the Proton donor. The active-site N6-(4-deoxychorismate)-lysine intermediate is the Lys-274.

This sequence belongs to the anthranilate synthase component I family. In terms of assembly, monomer. Heterodimer consisting of two non-identical subunits: a glutamine amidotransferase subunit (PabA) and a aminodeoxychorismate synthase subunit (PabB). It depends on Mg(2+) as a cofactor.

It catalyses the reaction chorismate + L-glutamine = 4-amino-4-deoxychorismate + L-glutamate. It functions in the pathway cofactor biosynthesis; tetrahydrofolate biosynthesis; 4-aminobenzoate from chorismate: step 1/2. Inhibited by 6-diazo-5-oxo-L-norleucine (DON). The inhibition is competitive with glutamine but uncompetitive with chorismate. Also inhibited by 2-fluorochorismate. Part of a heterodimeric complex that catalyzes the two-step biosynthesis of 4-amino-4-deoxychorismate (ADC), a precursor of p-aminobenzoate (PABA) and tetrahydrofolate. In the first step, a glutamine amidotransferase (PabA) generates ammonia as a substrate that, along with chorismate, is used in the second step, catalyzed by aminodeoxychorismate synthase (PabB) to produce ADC. PabB, in the absence of PabA, can catalyze the formation of ADC in the presence of exogenous ammonia. This is Aminodeoxychorismate synthase component 1 (pabB) from Escherichia coli (strain K12).